Consider the following 263-residue polypeptide: uncharacterized protein (263 aa).

A run of 7 helical transmembrane segments spans residues 53–73, 103–123, 130–150, 153–173, 181–201, 213–233, and 241–261; these read FWIILILTFISLCEVKLLVKI, GFLFGSPFAIGQIILFLLPGL, IILPLLLSSLGLFGFGLVFSY, LIPAALNFFLNYSDEVIEPLW, FILVLFYSTGLAFQIPIIQIL, MLAAWRYIILVSTIIGAILTP, and LLLSIAILMLYFSGVGILFLI.

It belongs to the TatC family.

It is found in the plastid. Its subcellular location is the chloroplast membrane. This is an uncharacterized protein from Trieres chinensis (Marine centric diatom).